The sequence spans 605 residues: Tungsten-containing aldehyde ferredoxin oxidoreductase (605 aa).

R76, N93, G95, R182, A183, G185, and R186 together coordinate tungstopterin. [4Fe-4S] cluster contacts are provided by C288, C291, and C295. Residues D338, L342, D343, R444, K450, D489, and L493 each contribute to the tungstopterin site. C494 lines the [4Fe-4S] cluster pocket. L495 serves as a coordination point for tungstopterin.

The protein belongs to the AOR/FOR family. As to quaternary structure, monomer. Homodimer. Requires [4Fe-4S] cluster as cofactor. Tungstopterin is required as a cofactor.

It catalyses the reaction an aldehyde + 2 oxidized [2Fe-2S]-[ferredoxin] + H2O = a carboxylate + 2 reduced [2Fe-2S]-[ferredoxin] + 3 H(+). Inhibited by arsenite, iodoacetate and cyanide. Functionally, aldehyde ferredoxin oxidoreductase with a broad substrate specificity. Catalyzes the oxidation of a range of aliphatic aldehydes to their corresponding carboxylic acids. In vitro can use crotonaldehyde, acetaldehyde, formaldehyde, butyraldehyde or glyceraldehyde as substrate, using methyl viologen or ferredoxin, but not NAD(P), as the electron acceptor. Does not oxidize glucose or glyceraldehyde 3-phosphate. May be involved in a pyroglycolytic pathway. The protein is Tungsten-containing aldehyde ferredoxin oxidoreductase of Pyrococcus furiosus (strain ATCC 43587 / DSM 3638 / JCM 8422 / Vc1).